A 695-amino-acid chain; its full sequence is Serotransferrin (695 aa).

A signal peptide spans 1–19; it reads MRLAAGALLACAALGLCLA. 2 consecutive Transferrin-like domains span residues 25 to 347 and 361 to 680; these read VRWC…NLRE and VKWC…NLRK. Cystine bridges form between C28/C67 and C38/C58. At R42 the chain carries Dimethylated arginine. Residues D82 and Y114 each contribute to the Fe(3+) site. Cystine bridges form between C137–C213, C156–C350, C177–C193, C180–C196, C190–C198, C246–C260, C358–C612, C364–C396, C374–C387, C421–C690, C436–C653, C468–C539, C492–C681, C502–C516, C513–C522, C579–C593, and C631–C636. Positions 139, 143, 145, and 146 each coordinate hydrogencarbonate. Y207 is a binding site for Fe(3+). H268 is a Fe(3+) binding site. The residue at position 389 (S389) is a Phosphoserine. Residues D411 and Y444 each coordinate Fe(3+). Hydrogencarbonate is bound by residues T470, R474, A476, and G477. N-linked (GlcNAc...) asparagine glycosylation occurs at N509. Fe(3+) is bound at residue Y533. Residue H601 participates in Fe(3+) binding. S682 bears the Phosphoserine mark.

It belongs to the transferrin family. Monomer. Part of a complex composed of SLC40A1/ferroportin, TF/transferrin and HEPH/hephaestin that transfers iron from cells to transferrin. Expressed by the liver and secreted in plasma.

Its subcellular location is the secreted. Transferrins are iron binding transport proteins which can bind two Fe(3+) ions in association with the binding of an anion, usually bicarbonate. It is responsible for the transport of iron from sites of absorption and heme degradation to those of storage and utilization. Serum transferrin may also have a further role in stimulating cell proliferation. The protein is Serotransferrin (TF) of Oryctolagus cuniculus (Rabbit).